The sequence spans 345 residues: N-acetyl-gamma-glutamyl-phosphate reductase (345 aa).

C149 is a catalytic residue.

It belongs to the NAGSA dehydrogenase family. Type 1 subfamily.

It is found in the cytoplasm. It carries out the reaction N-acetyl-L-glutamate 5-semialdehyde + phosphate + NADP(+) = N-acetyl-L-glutamyl 5-phosphate + NADPH + H(+). It functions in the pathway amino-acid biosynthesis; L-arginine biosynthesis; N(2)-acetyl-L-ornithine from L-glutamate: step 3/4. Its function is as follows. Catalyzes the NADPH-dependent reduction of N-acetyl-5-glutamyl phosphate to yield N-acetyl-L-glutamate 5-semialdehyde. The polypeptide is N-acetyl-gamma-glutamyl-phosphate reductase (Bacillus cereus (strain ATCC 10987 / NRS 248)).